Reading from the N-terminus, the 314-residue chain is tRNA-cytidine(32) 2-sulfurtransferase (314 aa).

A PP-loop motif motif is present at residues 49 to 54; it reads SGGKDS. Positions 124, 127, and 215 each coordinate [4Fe-4S] cluster.

Belongs to the TtcA family. Homodimer. Mg(2+) is required as a cofactor. [4Fe-4S] cluster serves as cofactor.

The protein localises to the cytoplasm. The enzyme catalyses cytidine(32) in tRNA + S-sulfanyl-L-cysteinyl-[cysteine desulfurase] + AH2 + ATP = 2-thiocytidine(32) in tRNA + L-cysteinyl-[cysteine desulfurase] + A + AMP + diphosphate + H(+). The protein operates within tRNA modification. Catalyzes the ATP-dependent 2-thiolation of cytidine in position 32 of tRNA, to form 2-thiocytidine (s(2)C32). The sulfur atoms are provided by the cysteine/cysteine desulfurase (IscS) system. The sequence is that of tRNA-cytidine(32) 2-sulfurtransferase from Histophilus somni (strain 129Pt) (Haemophilus somnus).